A 448-amino-acid chain; its full sequence is Probable alpha-galactosidase B (448 aa).

Residues 1-23 form the signal peptide; that stretch reads MSRFHLPLAAAVVLVSCLWSANA. 2 cysteine pairs are disulfide-bonded: cysteine 46–cysteine 78 and cysteine 128–cysteine 158. Aspartate 156 acts as the Nucleophile in catalysis. Residues asparagine 163 and asparagine 181 are each glycosylated (N-linked (GlcNAc...) asparagine). 226–230 lines the substrate pocket; the sequence is EWGQA. A glycan (N-linked (GlcNAc...) asparagine) is linked at asparagine 237. Aspartate 248 functions as the Proton donor in the catalytic mechanism.

It belongs to the glycosyl hydrolase 27 family.

The protein resides in the secreted. It catalyses the reaction Hydrolysis of terminal, non-reducing alpha-D-galactose residues in alpha-D-galactosides, including galactose oligosaccharides, galactomannans and galactolipids.. In terms of biological role, hydrolyzes a variety of simple alpha-D-galactoside as well as more complex molecules such as oligosaccharides and polysaccharides. The polypeptide is Probable alpha-galactosidase B (aglB) (Aspergillus clavatus (strain ATCC 1007 / CBS 513.65 / DSM 816 / NCTC 3887 / NRRL 1 / QM 1276 / 107)).